The primary structure comprises 142 residues: DNA-directed RNA polymerase subunit omega (142 aa).

The tract at residues 93-142 (AWSVPEAGGDEGGDASELLDDEGEGAAAGAEPDFSEMDVPLADLADEDKI) is disordered. Residues 100 to 116 (GGDEGGDASELLDDEGE) show a composition bias toward acidic residues.

It belongs to the RNA polymerase subunit omega family. The RNAP catalytic core consists of 2 alpha, 1 beta, 1 beta' and 1 omega subunit. When a sigma factor is associated with the core the holoenzyme is formed, which can initiate transcription.

It carries out the reaction RNA(n) + a ribonucleoside 5'-triphosphate = RNA(n+1) + diphosphate. In terms of biological role, promotes RNA polymerase assembly. Latches the N- and C-terminal regions of the beta' subunit thereby facilitating its interaction with the beta and alpha subunits. The protein is DNA-directed RNA polymerase subunit omega of Rhodospirillum centenum (strain ATCC 51521 / SW).